The following is a 557-amino-acid chain: MSSTHPLKDQLALLIEAALEALAPDAPVSLEIERPKNPTHGDFSSNAAMQLARPLKRNPRELAQLIVTELPASTLVAKADIAGAGFINFHLTPAAWHGIVRQVRTAGAQFGRAQRETPQRVLIEFVSANPTGPLHVGHGRQAALGDALCNLYAAQGWDVYREFYYNDAGVQIATLAASVQARARGLQPGDATWPEAAYNGDYIADIARDFLAGKTVKSDDREFTASGDVDDLDSIRQFAVAYLRHEQDLDLRAFAVHFDNYYLESSLYTDGRVDATVQRLVAAGKTYEQDGALWLRTTEYGDDKDRVMKKSDGTYTYFVPDVAYHIAKWERGFARAINIQGTDHHGTIARVRAGLQAASVGIPEGYPDYLLHTMVRVMRGGEEVKISKRAGSYVTLRDLIEWTSKDAVRFFLLSRKADTEYVFDIDLALARNNDNPVYYVQYAHARICRVFEEWSGDVATLADADLAPLEAAHELALMQRLAEYPETVASAARDLAPHLLVHYLQMLAGDFHAWYNAEKFLVADEATKRARLALADATRIVIVNGLALLGVDAPEKM.

A 'HIGH' region motif is present at residues 128–138; that stretch reads ANPTGPLHVGH.

It belongs to the class-I aminoacyl-tRNA synthetase family. As to quaternary structure, monomer.

The protein resides in the cytoplasm. It carries out the reaction tRNA(Arg) + L-arginine + ATP = L-arginyl-tRNA(Arg) + AMP + diphosphate. The chain is Arginine--tRNA ligase from Thiobacillus denitrificans (strain ATCC 25259 / T1).